We begin with the raw amino-acid sequence, 232 residues long: Lipoprotein-releasing system ATP-binding protein LolD (232 aa).

Positions 6–231 (ISCENLNKVY…KLTIKESQHV (226 aa)) constitute an ABC transporter domain. 42-49 (GSSGSGKS) serves as a coordination point for ATP.

This sequence belongs to the ABC transporter superfamily. Lipoprotein translocase (TC 3.A.1.125) family. In terms of assembly, the complex is composed of two ATP-binding proteins (LolD) and two transmembrane proteins (LolC and LolE).

The protein resides in the cell inner membrane. Part of the ABC transporter complex LolCDE involved in the translocation of mature outer membrane-directed lipoproteins, from the inner membrane to the periplasmic chaperone, LolA. Responsible for the formation of the LolA-lipoprotein complex in an ATP-dependent manner. This chain is Lipoprotein-releasing system ATP-binding protein LolD, found in Pseudoalteromonas translucida (strain TAC 125).